A 504-amino-acid polypeptide reads, in one-letter code: Pyrichalasin C-7 hydroxylase (504 aa).

Residues 1–17 form the signal peptide; sequence MLNSAACIVLAITAVLG. Cys-449 is a binding site for heme.

The protein belongs to the cytochrome P450 family. Requires heme as cofactor.

It participates in mycotoxin biosynthesis. Its function is as follows. Cytochrome P450 monooxygenase; part of the gene cluster that mediates the biosynthesis of the mycotoxin pyrichalasin H, a tyrosine-derived cytochalasan that inhibits the growth of rice seedlings, but also inhibits lymphocyte capping and actin polymerization and alters cell morphology. Pyrichalasin H is indicated as the responsible agent for the genus-specific pathogenicity of M.grisea toward crabgrass. The first step in the pathway is catalyzed by the O-methyltransferase pyiA which methylates free tyrosine to generate the precursor O-methyltyrosine. The hybrid PKS-NRPS pyiS, assisted by the enoyl reductase pyiC, are responsible for fusion of the O-methyltyrosine precursor and the polyketide backbone. The polyketide synthase module (PKS) of pyiS is responsible for the synthesis of the polyketide backbone and the downstream nonribosomal peptide synthetase (NRPS) amidates the carboxyl end of the polyketide with the O-methyltyrosine precursor. As the NRPS A-domain demonstrates substrate tolerance, pyiS can also use phenylalanine, tyrosine and even para-chlorophenylalanine as amino acid precursor, which leads to the production of novel cytochalasans, including halogenated cytochalasans. Because pyiS lacks a designated enoylreductase (ER) domain, the required activity is provided the enoyl reductase pyiC. Reduction by the hydrolyase pyiE leads to 1,5-dihydropyrrolone, which is substrate for dehydration and intra-molecular Diels-Alder cyclization by the Diels-Alderase pyiF to yield the required isoindolone-fused macrocycle. The tailoring cytochrome P450 monooxygenases piyD and piyG catalyze the hydroxylation at C-18 and C-7, respectivily, whereas the short-chain dehydrogenase/reductase pyiH reduces the carbonyl at C-21 in preparation for the transfer of an acetyl group by the acetyltransferase pyiB. These 3 reactions whose order is not clear yet, lead to the production of O-methylpyrichalasin J, a deacetylated pyrichalasin H. Finally, pyiB to converts O-methylpyrichalasin J into the final product pyrichalasin H via acetylation of C-21. The protein is Pyrichalasin C-7 hydroxylase of Pyricularia grisea (Crabgrass-specific blast fungus).